The sequence spans 292 residues: ATP synthase gamma chain (292 aa).

It belongs to the ATPase gamma chain family. In terms of assembly, F-type ATPases have 2 components, CF(1) - the catalytic core - and CF(0) - the membrane proton channel. CF(1) has five subunits: alpha(3), beta(3), gamma(1), delta(1), epsilon(1). CF(0) has three main subunits: a, b and c.

The protein resides in the cell inner membrane. In terms of biological role, produces ATP from ADP in the presence of a proton gradient across the membrane. The gamma chain is believed to be important in regulating ATPase activity and the flow of protons through the CF(0) complex. This Hyphomonas neptunium (strain ATCC 15444) protein is ATP synthase gamma chain.